The primary structure comprises 397 residues: Erythromycin C-12 hydroxylase (397 aa).

74-75 contributes to the substrate binding site; that stretch reads HE. Residues His81 and Arg85 each contribute to the heme site. Gln278 is a binding site for substrate. Arg279 contributes to the heme binding site. Residues 307-322 are compositionally biased toward basic and acidic residues; that stretch reads RDSDAHDDPDRFDPSR. The interval 307–326 is disordered; the sequence is RDSDAHDDPDRFDPSRKSGG. Positions 337 and 339 each coordinate heme.

It belongs to the cytochrome P450 family. Monomer. It depends on heme b as a cofactor.

It carries out the reaction erythromycin D + NADPH + O2 + H(+) = erythromycin C + NADP(+) + H2O. The protein operates within antibiotic biosynthesis; erythromycin biosynthesis. Functionally, responsible for the C-12 hydroxylation of the macrolactone ring of erythromycin. Thus, EryK catalyzes the hydroxylation of erythromycin D (ErD) at the C-12 position to produce erythromycin C (ErC). Erythromycin B (ErB) is not a substrate for this enzyme. The protein is Erythromycin C-12 hydroxylase (eryK) of Saccharopolyspora erythraea (strain ATCC 11635 / DSM 40517 / JCM 4748 / NBRC 13426 / NCIMB 8594 / NRRL 2338).